The primary structure comprises 337 residues: Protein SphX (337 aa).

An N-terminal signal peptide occupies residues 1 to 30 (MTTLKPALRRAAVLLPIAAVASSLFPIQEA).

Belongs to the PstS family. The N-terminus is blocked.

It is found in the cell inner membrane. Its function is as follows. May be involved in the system for phosphate transport across the cytoplasmic membrane. The sequence is that of Protein SphX (sphX) from Synechococcus elongatus (strain ATCC 33912 / PCC 7942 / FACHB-805) (Anacystis nidulans R2).